A 215-amino-acid polypeptide reads, in one-letter code: Nascent polypeptide-associated complex subunit alpha (215 aa).

The disordered stretch occupies residues 1–82; sequence MPGEATETVP…EKKARKAMSK (82 aa). Over residues 9–28 the composition is skewed to polar residues; the sequence is VPVTEQEMQQPQAETGSGTE. Positions 29 to 42 are enriched in acidic residues; that stretch reads SDSDESVPDLEEGD. Residues 44 to 57 are compositionally biased toward low complexity; that stretch reads AQTQTQQAQLAAAA. The NAC-A/B domain maps to 70–135; sequence SRSEKKARKA…AKIEDLSQQA (66 aa). Position 166 is a phosphoserine (serine 166). Residues 176–213 form the UBA domain; that stretch reads VEVKDIELVMSQANVSRAKAVRALKNNNNDIVNAIMEL.

It belongs to the NAC-alpha family.

Its function is as follows. May promote appropriate targeting of ribosome-nascent polypeptide complexes. The polypeptide is Nascent polypeptide-associated complex subunit alpha (naca) (Danio rerio (Zebrafish)).